A 127-amino-acid chain; its full sequence is Fluoride-specific ion channel FluC (127 aa).

Transmembrane regions (helical) follow at residues 4 to 24, 35 to 55, 71 to 91, and 101 to 121; these read IMLA…WLGL, VGTL…LAWF, TGLC…VFLL, and LNVA…FWLF. 2 residues coordinate Na(+): Gly75 and Thr78.

The protein belongs to the fluoride channel Fluc/FEX (TC 1.A.43) family.

The protein localises to the cell inner membrane. It carries out the reaction fluoride(in) = fluoride(out). With respect to regulation, na(+) is not transported, but it plays an essential structural role and its presence is essential for fluoride channel function. Functionally, fluoride-specific ion channel. Important for reducing fluoride concentration in the cell, thus reducing its toxicity. The protein is Fluoride-specific ion channel FluC of Cronobacter sakazakii (strain ATCC BAA-894) (Enterobacter sakazakii).